The primary structure comprises 161 residues: Small ribosomal subunit protein uS9 (161 aa).

This sequence belongs to the universal ribosomal protein uS9 family.

This is Small ribosomal subunit protein uS9 from Rickettsia typhi (strain ATCC VR-144 / Wilmington).